Here is a 166-residue protein sequence, read N- to C-terminus: Probable dual specificity protein phosphatase H1 homolog (166 aa).

The Tyrosine-protein phosphatase domain occupies 25–166; the sequence is DITKITDYVY…FLNQIIDKYI (142 aa). Cysteine 108 (phosphocysteine intermediate) is an active-site residue.

The protein belongs to the protein-tyrosine phosphatase family. Non-receptor class dual specificity subfamily. Homodimer.

The protein localises to the virion. It localises to the host cytoplasm. The enzyme catalyses O-phospho-L-tyrosyl-[protein] + H2O = L-tyrosyl-[protein] + phosphate. It catalyses the reaction O-phospho-L-seryl-[protein] + H2O = L-seryl-[protein] + phosphate. Functionally, serine/Tyrosine phosphatase which down-regulates cellular antiviral response by dephosphorylating activated STAT1 and blocking interferon (IFN)-stimulated innate immune responses. In Vertebrata (FPV), this protein is Probable dual specificity protein phosphatase H1 homolog.